Consider the following 533-residue polypeptide: Probable bifunctional tRNA threonylcarbamoyladenosine biosynthesis protein (533 aa).

The segment at 1–328 (MRILGIEGTA…FRPDAVTVTW (328 aa)) is kae1. Fe cation is bound by residues His-112 and His-116. L-threonylcarbamoyladenylate contacts are provided by residues 133 to 137 (NASGA), Asp-165, Gly-178, Glu-182, and Asn-261. Residue Asp-289 participates in Fe cation binding. The Protein kinase domain maps to 339 to 533 (PATLDKTPVR…RDIESRGRYH (195 aa)). ATP is bound by residues 347-354 (VRGAEAIV) and Lys-363. Asp-452 serves as the catalytic Proton acceptor; for kinase activity.

The protein in the N-terminal section; belongs to the KAE1 / TsaD family. In the C-terminal section; belongs to the protein kinase superfamily. Tyr protein kinase family. BUD32 subfamily. In terms of assembly, component of the KEOPS complex that consists of Kae1, Bud32, Cgi121 and Pcc1; the whole complex dimerizes. Requires Fe(2+) as cofactor.

It localises to the cytoplasm. The catalysed reaction is L-seryl-[protein] + ATP = O-phospho-L-seryl-[protein] + ADP + H(+). It carries out the reaction L-threonyl-[protein] + ATP = O-phospho-L-threonyl-[protein] + ADP + H(+). The enzyme catalyses L-threonylcarbamoyladenylate + adenosine(37) in tRNA = N(6)-L-threonylcarbamoyladenosine(37) in tRNA + AMP + H(+). In terms of biological role, required for the formation of a threonylcarbamoyl group on adenosine at position 37 (t(6)A37) in tRNAs that read codons beginning with adenine. Is a component of the KEOPS complex that is probably involved in the transfer of the threonylcarbamoyl moiety of threonylcarbamoyl-AMP (TC-AMP) to the N6 group of A37. The Kae1 domain likely plays a direct catalytic role in this reaction. The Bud32 domain probably displays kinase activity that regulates Kae1 function. The polypeptide is Probable bifunctional tRNA threonylcarbamoyladenosine biosynthesis protein (Haloquadratum walsbyi (strain DSM 16790 / HBSQ001)).